The following is a 606-amino-acid chain: EPM2A-interacting protein 1 (606 aa).

Residue serine 147 is modified to Phosphoserine.

Interacts with EPM2A.

Its subcellular location is the endoplasmic reticulum. The polypeptide is EPM2A-interacting protein 1 (Epm2aip1) (Mus musculus (Mouse)).